The following is a 99-amino-acid chain: Essential MCU regulator, mitochondrial (99 aa).

A mitochondrion-targeting transit peptide spans Met-1–Thr-39. The Mitochondrial matrix segment spans residues Ala-40 to Phe-57. A helical transmembrane segment spans residues Gly-58–Ser-77. Residues Lys-78 to Asp-99 lie on the Mitochondrial intermembrane side of the membrane.

It belongs to the SMDT1/EMRE family. In terms of assembly, component of the uniplex complex.

The protein localises to the mitochondrion inner membrane. Functionally, essential regulatory subunit of the mitochondrial calcium uniporter complex (uniplex), a complex that mediates calcium uptake into mitochondria. Required to bridge the calcium-sensing proteins micu1 with the calcium-conducting subunit mcu. Acts by mediating activation of mcu and retention of micu1 to the mcu pore, in order to ensure tight regulation of the uniplex complex and appropriate responses to intracellular calcium signaling. This Xenopus tropicalis (Western clawed frog) protein is Essential MCU regulator, mitochondrial.